Consider the following 400-residue polypeptide: Multidrug resistance protein MdtH (400 aa).

At 1–12 (MSRVSQARNLGK) the chain is on the cytoplasmic side. Residues 13-33 (YFLLIDNMLVVLGFFVVFPLI) traverse the membrane as a helical segment. Over 34 to 98 (SIRFVDQMGW…GFATMGIAHE (65 aa)) the chain is Periplasmic. A helical membrane pass occupies residues 99-116 (PWLLWFSCLLSGLGGTLF). The Cytoplasmic portion of the chain corresponds to 117-138 (DPPRSALVVKLIRPQQRGRFFS). A helical transmembrane segment spans residues 139-159 (LLMMQDSAGAVIGALLGSWLL). Residues 160 to 164 (QYDFR) lie on the Periplasmic side of the membrane. Residues 165 to 185 (LVCATGAVLFVLCAAFNAWLL) traverse the membrane as a helical segment. Residues 186–213 (PAWKLSTVRTPVREGMTRVMRDKRFVTY) are Cytoplasmic-facing. The helical transmembrane segment at 214–232 (VLTLAGYYMLAVQVMLPIM) threads the bilayer. Residues 233–241 (VNDVAGAPS) are Periplasmic-facing. The helical transmembrane segment at 242–262 (AVKWMYAIEACLSLTLLYPIA) threads the bilayer. Topologically, residues 263 to 274 (RWSEKHFRLEHR) are cytoplasmic. Residues 275–295 (LMAGLLIMSLSMMPVGMVSGL) traverse the membrane as a helical segment. Residues 296-297 (QQ) lie on the Periplasmic side of the membrane. A helical transmembrane segment spans residues 298-318 (LFTLICLFYIGSIIAEPARET). Residues 319 to 337 (LSASLADARARGSYMGFSR) are Cytoplasmic-facing. The helical transmembrane segment at 338–358 (LGLAIGGAIGYIGGGWLFDLG) threads the bilayer. Residues 359-365 (KSAHQPE) are Periplasmic-facing. The chain crosses the membrane as a helical span at residues 366 to 386 (LPWMMLGIIGIFTFLALGWQF). Residues 387 to 400 (SQKRAARRLLERDA) lie on the Cytoplasmic side of the membrane.

Belongs to the major facilitator superfamily. DHA1 family. MdtH (TC 2.A.1.2.21) subfamily.

It localises to the cell inner membrane. The sequence is that of Multidrug resistance protein MdtH from Shigella boydii serotype 4 (strain Sb227).